Reading from the N-terminus, the 648-residue chain is Wilms tumor protein 1-interacting protein homolog (648 aa).

Disordered regions lie at residues 27 to 56 (DGMY…KVYS), 142 to 291 (SNSL…SPRS), and 306 to 327 (SPRS…GSMS). Composition is skewed to low complexity over residues 158–171 (SPRS…SSQD) and 178–192 (PRSS…LVSP). Polar residues-rich tracts occupy residues 197-213 (GTSV…TASD) and 220-241 (PRTS…TSGI). Low complexity predominate over residues 252–267 (PRSSTTSPRSSYSDSR). LIM zinc-binding domains are found at residues 437-498 (GICV…SGFQ), 502-561 (EKCF…TVFA), and 562-631 (PKCA…RLKT).

It belongs to the zyxin/ajuba family.

It localises to the cell junction. The protein resides in the adherens junction. The protein localises to the nucleus. Its function is as follows. May monitor slit diaphragm protein assembly, a specialized adherens junction characteristic of podocytes. In case of podocyte injury, it shuttles into the nucleus and acts as a transcription regulator. Plays a role in the regulation of cell morphology and cytoskeletal organization. Acts as a transcriptional corepressor for snai1 and snai2/slug and plays a role in regulating neural crest development. The polypeptide is Wilms tumor protein 1-interacting protein homolog (wtip) (Danio rerio (Zebrafish)).